Consider the following 249-residue polypeptide: 1-(5-phosphoribosyl)-5-[(5-phosphoribosylamino)methylideneamino] imidazole-4-carboxamide isomerase (249 aa).

Residue aspartate 8 is the Proton acceptor of the active site. The active-site Proton donor is the aspartate 130.

It belongs to the HisA/HisF family.

It localises to the cytoplasm. It catalyses the reaction 1-(5-phospho-beta-D-ribosyl)-5-[(5-phospho-beta-D-ribosylamino)methylideneamino]imidazole-4-carboxamide = 5-[(5-phospho-1-deoxy-D-ribulos-1-ylimino)methylamino]-1-(5-phospho-beta-D-ribosyl)imidazole-4-carboxamide. It participates in amino-acid biosynthesis; L-histidine biosynthesis; L-histidine from 5-phospho-alpha-D-ribose 1-diphosphate: step 4/9. The chain is 1-(5-phosphoribosyl)-5-[(5-phosphoribosylamino)methylideneamino] imidazole-4-carboxamide isomerase from Nitrosococcus oceani (strain ATCC 19707 / BCRC 17464 / JCM 30415 / NCIMB 11848 / C-107).